The primary structure comprises 602 residues: Elongation factor 4 (602 aa).

In terms of domain architecture, tr-type G spans Asn2–Arg184. GTP-binding positions include Asp14–Thr19 and Asn131–Asp134.

It belongs to the TRAFAC class translation factor GTPase superfamily. Classic translation factor GTPase family. LepA subfamily.

The protein resides in the cell inner membrane. The catalysed reaction is GTP + H2O = GDP + phosphate + H(+). In terms of biological role, required for accurate and efficient protein synthesis under certain stress conditions. May act as a fidelity factor of the translation reaction, by catalyzing a one-codon backward translocation of tRNAs on improperly translocated ribosomes. Back-translocation proceeds from a post-translocation (POST) complex to a pre-translocation (PRE) complex, thus giving elongation factor G a second chance to translocate the tRNAs correctly. Binds to ribosomes in a GTP-dependent manner. This Acidovorax ebreus (strain TPSY) (Diaphorobacter sp. (strain TPSY)) protein is Elongation factor 4.